A 228-amino-acid polypeptide reads, in one-letter code: 2-hydroxy-3-keto-5-methylthiopentenyl-1-phosphate phosphatase (228 aa).

Belongs to the HAD-like hydrolase superfamily. MtnX family.

The enzyme catalyses 2-hydroxy-5-methylsulfanyl-3-oxopent-1-enyl phosphate + H2O = 1,2-dihydroxy-5-(methylsulfanyl)pent-1-en-3-one + phosphate. It participates in amino-acid biosynthesis; L-methionine biosynthesis via salvage pathway; L-methionine from S-methyl-5-thio-alpha-D-ribose 1-phosphate: step 4/6. Its function is as follows. Dephosphorylates 2-hydroxy-3-keto-5-methylthiopentenyl-1-phosphate (HK-MTPenyl-1-P) yielding 1,2-dihydroxy-3-keto-5-methylthiopentene (DHK-MTPene). This is 2-hydroxy-3-keto-5-methylthiopentenyl-1-phosphate phosphatase from Lysinibacillus sphaericus (strain C3-41).